A 366-amino-acid polypeptide reads, in one-letter code: Lysophosphatidic acid receptor 1-A (366 aa).

Over 1-52 (MASLSEFVSEPISMMSQTSAASESQCYYNETIAFFYNRSGKYLATEWNAVSK) the chain is Extracellular. 2 disulfide bridges follow: Cys26-Cys192 and Cys190-Cys197. Asn29 and Asn37 each carry an N-linked (GlcNAc...) asparagine glycan. An a 1-acyl-sn-glycero-3-phosphate-binding site is contributed by Lys41. A helical transmembrane segment spans residues 53–77 (LVMGLGITVCIFIMLANLLVMVAIY). Over 78–85 (VNRRFHFP) the chain is Cytoplasmic. The chain crosses the membrane as a helical span at residues 86-109 (IYYLMANLAAADFFAGLAYFYLMF). The Extracellular segment spans residues 110-123 (NTGPNTRRLTVSTW). The chain crosses the membrane as a helical span at residues 124-146 (LLRQGLIDTSLTASVANLLAIAI). 126–131 (RQGLID) contributes to the a 1-acyl-sn-glycero-3-phosphate binding site. Over 147 to 165 (ERHITVFRMQLHTRMSNRR) the chain is Cytoplasmic. The helical transmembrane segment at 166-186 (VVVVIVVIWTVAIVMGAIPSV) threads the bilayer. The Extracellular segment spans residues 187-206 (GWNCICDLEQCSNMAPLYSD). Residues 207 to 227 (SYLIFWTIFNLVTFVVMVVLY) form a helical membrane-spanning segment. Position 212 (Trp212) interacts with a 1-acyl-sn-glycero-3-phosphate. Residues 228 to 257 (AHIFVYVRQKTMRMSRHSSGPRRNRDTMMS) lie on the Cytoplasmic side of the membrane. The chain crosses the membrane as a helical span at residues 258 to 282 (LLKTVVIVLGAFIVCWTPGLVLLLL). At 283 to 296 (DICCPQCNILAYEK) the chain is on the extracellular side. An intrachain disulfide couples Cys286 to Cys289. The helical transmembrane segment at 297–317 (FFLLLAEFNSAMNPIIYSYRD) threads the bilayer. Over 318–366 (KEMSATFKQILCCQRTENVNGPTEGSDRSASSLNHTILAGVHSNDHSVV) the chain is Cytoplasmic.

Belongs to the G-protein coupled receptor 1 family. Expressed at high levels in oocytes and at lower levels in brain and spinal cord. Below detection level in lung, heart, kidney, liver, muscle, stomach, and intestine.

Its subcellular location is the cell surface. It localises to the cell membrane. The protein resides in the endosome. Its function is as follows. Receptor for lysophosphatidic acid (LPA). Plays a role in the reorganization of the actin cytoskeleton, cell migration, differentiation and proliferation, and thereby contributes to the responses to tissue damage and infectious agents. Activates downstream signaling cascades via the G(i)/G(o), G(12)/G(13), and G(q) families of heteromeric G proteins. Signaling inhibits adenylyl cyclase activity and decreases cellular cAMP levels. Signaling triggers an increase of cytoplasmic Ca(2+) levels. Signaling leads to the activation of phospholipase C (PLC) and the formation of inositol 1,4,5-trisphosphate. Signaling mediates activation of down-stream MAP kinases. Contributes to the regulation of cell shape. Promotes Rho-dependent reorganization of the actin cytoskeleton in neuronal cells and neurite retraction. Promotes the activation of Rho and the formation of actin stress fibers. Promotes formation of lamellipodia at the leading edge of migrating cells via activation of Rac. Through its function as lysophosphatidic acid receptor, plays a role in chemotaxis and cell migration, including responses to injury and wounding. Promotes cell proliferation in response to lysophosphatidic acid. In Xenopus laevis (African clawed frog), this protein is Lysophosphatidic acid receptor 1-A (lpar1-a).